The chain runs to 185 residues: 4-nitrophenol 4-monooxygenase/4-nitrocatechol 2-monooxygenase, reductase component (185 aa).

The protein belongs to the non-flavoprotein flavin reductase family. The 4-NP/4-NCA monooxygenase is composed of an oxygenase component NpcA and a reductase component NpcB.

It catalyses the reaction 4-nitrophenol + NADH + O2 + H(+) = 4-nitrocatechol + NAD(+) + H2O. The catalysed reaction is 4-nitrocatechol + NADPH + O2 = 2-hydroxy-1,4-benzoquinone + nitrite + NADP(+) + H2O. It carries out the reaction 4-nitrocatechol + NADH + O2 = 2-hydroxy-1,4-benzoquinone + nitrite + NAD(+) + H2O. The protein operates within aromatic compound metabolism. It functions in the pathway xenobiotic degradation. Inhibited by methimazole. Its function is as follows. Involved in the degradation of para-nitrophenol (4-NP). Catalyzes both the initial hydroxylation of 4-NP to produce 4-nitrocatechol (4-NCA) and the subsequent oxidative release of the nitro group from 4-NCA to produce 2-hydroxy-1,4-benzoquinone. It can also use 4-nitroresorcinol as substrate with a rate of nitrite release similar to that observed with the two physiological substrates, 4-PN and 4-NCA. The chain is 4-nitrophenol 4-monooxygenase/4-nitrocatechol 2-monooxygenase, reductase component (npcB) from Rhodococcus opacus (Nocardia opaca).